A 157-amino-acid chain; its full sequence is Transcription elongation factor GreA (157 aa).

This sequence belongs to the GreA/GreB family.

In terms of biological role, necessary for efficient RNA polymerase transcription elongation past template-encoded arresting sites. The arresting sites in DNA have the property of trapping a certain fraction of elongating RNA polymerases that pass through, resulting in locked ternary complexes. Cleavage of the nascent transcript by cleavage factors such as GreA or GreB allows the resumption of elongation from the new 3'terminus. GreA releases sequences of 2 to 3 nucleotides. The protein is Transcription elongation factor GreA of Bartonella tribocorum (strain CIP 105476 / IBS 506).